We begin with the raw amino-acid sequence, 437 residues long: Succinyl-CoA:cyclohexane-1-carboxylate CoA transferase (437 aa).

Gly221 to Ile225 is a binding site for CoA. Glu244 serves as the catalytic 5-glutamyl coenzyme A thioester intermediate. Leu319, Gly342, and Lys367 together coordinate CoA.

The protein belongs to the acetyl-CoA hydrolase/transferase family. As to quaternary structure, homodimer.

It carries out the reaction cyclohexane-1-carboxylate + succinyl-CoA = cyclohexane-1-carbonyl-CoA + succinate. The catalysed reaction is cyclohexane-1-carboxylate + butanoyl-CoA = cyclohexane-1-carbonyl-CoA + butanoate. Acyl-CoA transferase involved in the anaerobic degradation of cyclohexane carboxylic acid (CHC). Catalyzes the activation of CHC to cyclohexane-1-carbonyl-CoA (CHCoA). Benzoic acid and cyclohex-1-ene-1-carboxylic acid can also be used as substrates, but with lower specific activity. Shows highest activity with succinyl-CoA and butanoyl-coA as a CoA donor, and lower activity with crotonyl-CoA, acetyl-CoA, glutaryl-CoA, CH1eneCoA, propionyl-CoA and acetoacetyl-CoA. In vitro, the enzyme can use butanoyl-coA as a CoA donor with greater efficiency than succinyl-CoA. However, succinyl-CoA is the most abundant CoA ester in exponentially grown cells, whereas butanoyl-coA is hardly detectable, indicating that succinyl-CoA is the natural CoA donor for CHC activation. The protein is Succinyl-CoA:cyclohexane-1-carboxylate CoA transferase of Geobacter metallireducens (strain ATCC 53774 / DSM 7210 / GS-15).